Reading from the N-terminus, the 455-residue chain is ATP-dependent protease ATPase subunit HslU (455 aa).

Residues valine 23, 65–70 (GVGKTE), aspartate 266, glutamate 333, and arginine 405 contribute to the ATP site.

It belongs to the ClpX chaperone family. HslU subfamily. In terms of assembly, a double ring-shaped homohexamer of HslV is capped on each side by a ring-shaped HslU homohexamer. The assembly of the HslU/HslV complex is dependent on binding of ATP.

It localises to the cytoplasm. Its function is as follows. ATPase subunit of a proteasome-like degradation complex; this subunit has chaperone activity. The binding of ATP and its subsequent hydrolysis by HslU are essential for unfolding of protein substrates subsequently hydrolyzed by HslV. HslU recognizes the N-terminal part of its protein substrates and unfolds these before they are guided to HslV for hydrolysis. In Xanthomonas euvesicatoria pv. vesicatoria (strain 85-10) (Xanthomonas campestris pv. vesicatoria), this protein is ATP-dependent protease ATPase subunit HslU.